Here is a 188-residue protein sequence, read N- to C-terminus: Accessory gene regulator protein B (188 aa).

Helical transmembrane passes span 49–69 (LALL…FLTL), 104–126 (ISFQ…YAPA), 143–163 (IKSI…PPPY), and 166–186 (FVVY…SIKE).

It belongs to the AgrB family.

The protein localises to the cell membrane. Essential for the production of a quorum sensing system signal molecule, the autoinducing peptide (AIP). This quorum sensing system is responsible for the regulation of the expression of virulence factor genes. Involved in the proteolytic processing of AgrD, the precursor of AIP. The chain is Accessory gene regulator protein B from Staphylococcus intermedius.